Here is a 390-residue protein sequence, read N- to C-terminus: Succinyl-diaminopimelate desuccinylase 1 (390 aa).

His76 serves as a coordination point for Zn(2+). Asp78 is a catalytic residue. Asp109 contacts Zn(2+). Glu143 functions as the Proton acceptor in the catalytic mechanism. Zn(2+) is bound by residues Glu144, Glu172, and His363.

It belongs to the peptidase M20A family. DapE subfamily. As to quaternary structure, homodimer. Zn(2+) is required as a cofactor. Co(2+) serves as cofactor.

It carries out the reaction N-succinyl-(2S,6S)-2,6-diaminopimelate + H2O = (2S,6S)-2,6-diaminopimelate + succinate. It participates in amino-acid biosynthesis; L-lysine biosynthesis via DAP pathway; LL-2,6-diaminopimelate from (S)-tetrahydrodipicolinate (succinylase route): step 3/3. In terms of biological role, catalyzes the hydrolysis of N-succinyl-L,L-diaminopimelic acid (SDAP), forming succinate and LL-2,6-diaminopimelate (DAP), an intermediate involved in the bacterial biosynthesis of lysine and meso-diaminopimelic acid, an essential component of bacterial cell walls. This Alteromonas mediterranea (strain DSM 17117 / CIP 110805 / LMG 28347 / Deep ecotype) protein is Succinyl-diaminopimelate desuccinylase 1.